We begin with the raw amino-acid sequence, 914 residues long: MSETQKENPYSSTVLLPKTDFPMKADLAKREPAQIQSWKSGQIFRKMKEQRKGKKEFVLHDGPPYANGNFHLGHSLNKIVKDIIIKSKSLAGFYADMIPGWDCHGLPIEVQVLKNLGKKARETGPEELRRLCRNYAEEFVGKQGEDLSRFLCFWEEDRIYKTMSPGFEAKIVEVFGELFQNGYVYRGKKPVYWSIDLATAHAEAEIEYYPHVSPSIYVKFPIVGEQKKFCLIWTTTPWTLPANLGICFNRKIEYSFFKTESGEELILADGLAESVTSTTGVSLNKVKSISSDELSVLKFQHPFMDRISISLFGDHVTLDAGTGCVHTAPGHGQDDYKVGLAAGLEPFSPVDDYGKYTDEFPLMQGKKVFDANPEIIQLLKDKGLLLHHSEFEHSYPHSWRSKKPLIFRATPQWFFKMDFNELREKSLSAIDGVQWIPSWGITRIRSMVETRPDWCLSRQRNWGVPIPAFTCESCGQTHIDDVSIQFFTKMVREKGIEIWYSEKAADLLPPGTKCGKCGSDSFKKGNDILDVWFDSGVSSFAVLGERKDEPPADLYFEGSDQHRGWFQSSLWPSMALRGIPPYKTVLTHGYVLDEKGHPMSKSLGNGIDPTADVIQIYGADILRLWVSSLDFRDDIKVGKESLKIVSEQYRKIRNTFRYLLGNLDGHTSEQNLPFEELEELDLFYLSKLSQFAEDVIANYEAYQFHQIYQKLILFCTVTLSQDYFDMIRDRMYCDARNSKTRKSSATALQYILETLCILTAPILSFTAEEVWVSNGKKDSVFLQNFPDLKFWKNQNLEEKFESVLQVREVVQKALEIARQENKLGKSLEAGLEIVSKNGTNLTKILPKETLEILFVVSQVHEKNPGLDVLSFYENEKFSVKVLKPVQVECPRCWRHTEDISKEGDLCGRCKSVVG.

The 'HIGH' region signature appears at 64 to 74; sequence PYANGNFHLGH. Glu-557 contacts L-isoleucyl-5'-AMP. A 'KMSKS' region motif is present at residues 598 to 602; sequence PMSKS. Lys-601 provides a ligand contact to ATP. Zn(2+) is bound by residues Cys-889, Cys-892, Cys-906, and Cys-909.

This sequence belongs to the class-I aminoacyl-tRNA synthetase family. IleS type 1 subfamily. Monomer. Requires Zn(2+) as cofactor.

It localises to the cytoplasm. It carries out the reaction tRNA(Ile) + L-isoleucine + ATP = L-isoleucyl-tRNA(Ile) + AMP + diphosphate. Its function is as follows. Catalyzes the attachment of isoleucine to tRNA(Ile). As IleRS can inadvertently accommodate and process structurally similar amino acids such as valine, to avoid such errors it has two additional distinct tRNA(Ile)-dependent editing activities. One activity is designated as 'pretransfer' editing and involves the hydrolysis of activated Val-AMP. The other activity is designated 'posttransfer' editing and involves deacylation of mischarged Val-tRNA(Ile). In Leptospira interrogans serogroup Icterohaemorrhagiae serovar Lai (strain 56601), this protein is Isoleucine--tRNA ligase.